A 362-amino-acid polypeptide reads, in one-letter code: Phosphoglycolate phosphatase 1B, chloroplastic (362 aa).

The transit peptide at 1-54 (MLSRSVASAVTPVSSSSLLPNSKPIFCLKTLSGYRSSSFCGGCIRKINHKPLRM) directs the protein to the chloroplast. Thr-55 carries the N-acetylthreonine modification. Glu-80 functions as the Nucleophile in the catalytic mechanism. Ser-356 is modified (phosphoserine).

The protein belongs to the HAD-like hydrolase superfamily. CbbY/CbbZ/Gph/YieH family.

It is found in the plastid. The protein resides in the chloroplast. It carries out the reaction 2-phosphoglycolate + H2O = glycolate + phosphate. Functionally, photorespiratory enzyme that dephosphorylates the 2-phosphoglycolate produced by the RuBisCO oxygenation reaction. This is Phosphoglycolate phosphatase 1B, chloroplastic (PGLP1B) from Arabidopsis thaliana (Mouse-ear cress).